The chain runs to 321 residues: Transmembrane protein 255A (321 aa).

Transmembrane regions (helical) follow at residues 29 to 49 (VFVTVTLLIVSSLIFTLGMAA), 56 to 76 (VTVGGYYPGVILGFGSILGII), 88 to 108 (LVASIVFISFGVIAAFCCAIV), and 200 to 220 (TILNIVGLFLGIITAAVLGGF). Polar residues predominate over residues 279 to 297 (STPSGLSDDPNGQASSFMW). The interval 279–300 (STPSGLSDDPNGQASSFMWPSN) is disordered.

This sequence belongs to the TMEM255 family.

It localises to the membrane. In Xenopus laevis (African clawed frog), this protein is Transmembrane protein 255A (tmem255a).